We begin with the raw amino-acid sequence, 137 residues long: Bacteriohemerythrin (137 aa).

Positions 21, 53, 57, 72, 76, 112, and 117 each coordinate Fe cation.

Belongs to the hemerythrin family. As to quaternary structure, monomer.

In terms of biological role, oxygen-binding protein. May be involved in a storage mechanism or for delivery to oxygen-requiring enzymes. The oxygen-binding site contains two iron atoms. The chain is Bacteriohemerythrin from Ralstonia nicotianae (strain ATCC BAA-1114 / GMI1000) (Ralstonia solanacearum).